The chain runs to 776 residues: Peregrinol diphosphate synthase CPS1, chloroplastic (776 aa).

The transit peptide at Met1–Arg17 directs the protein to the chloroplast. Lys238 is a binding site for substrate. 2 residues coordinate Mg(2+): Asp371 and Asp373. The DXDD motif motif lies at Asp371–Asp374. Lys457 serves as a coordination point for substrate.

It belongs to the terpene synthase family. The cofactor is Mg(2+). In terms of tissue distribution, present in both leaves and flowers, with higher levels in leaves.

Its subcellular location is the plastid. It is found in the chloroplast. It carries out the reaction peregrinol diphosphate = (2E,6E,10E)-geranylgeranyl diphosphate + H2O. It participates in secondary metabolite biosynthesis; terpenoid biosynthesis. Its function is as follows. Involved in the biosynthesis of labdane-type diterpenoid including marrubiin and other labdane-related furanoid diterpenoids with potential applications as anti-diabetics, analgesics or vasorelaxants. Terpene synthase that produces peregrinol diphosphate from geranylgeranyl diphosphate (GGPP). This chain is Peregrinol diphosphate synthase CPS1, chloroplastic, found in Marrubium vulgare (White horehound).